The primary structure comprises 122 residues: Histone H2B.1 (122 aa).

The span at methionine 1–alanine 10 shows a compositional bias: low complexity. The interval methionine 1–lysine 28 is disordered. Alanine 2 carries the post-translational modification N,N,N-trimethylalanine. Lysine 5 and lysine 42 each carry N6-acetyllysine. Lysine 116 participates in a covalent cross-link: Glycyl lysine isopeptide (Lys-Gly) (interchain with G-Cter in ubiquitin).

The protein belongs to the histone H2B family. The nucleosome is a histone octamer containing two molecules each of H2A, H2B, H3 and H4 assembled in one H3-H4 heterotetramer and two H2A-H2B heterodimers. The octamer wraps approximately 147 bp of DNA. Post-translationally, acetylation occurs almost exclusively in the MAC. In terms of processing, monoubiquitination to form H2BK115ub1 gives a specific tag for epigenetic transcriptional activation and is also prerequisite for H3K4me and H3K79me formation.

It localises to the nucleus. The protein resides in the chromosome. In terms of biological role, core component of nucleosome. Nucleosomes wrap and compact DNA into chromatin, limiting DNA accessibility to the cellular machineries which require DNA as a template. Histones thereby play a central role in transcription regulation, DNA repair, DNA replication and chromosomal stability. DNA accessibility is regulated via a complex set of post-translational modifications of histones, also called histone code, and nucleosome remodeling. This chain is Histone H2B.1 (HTB1), found in Tetrahymena thermophila (strain SB210).